A 455-amino-acid polypeptide reads, in one-letter code: Gamma-aminobutyric acid receptor subunit alpha-1 (455 aa).

The signal sequence occupies residues methionine 1–glycine 27. Residues glutamine 28–phenylalanine 253 are Extracellular-facing. N-linked (GlcNAc...) asparagine glycosylation is present at asparagine 38. Arginine 94 provides a ligand contact to 4-aminobutanoate. Asparagine 138 carries N-linked (GlcNAc...) asparagine glycosylation. Threonine 157 serves as a coordination point for 4-aminobutanoate. An intrachain disulfide couples cysteine 166 to cysteine 180. A helical membrane pass occupies residues valine 254–leucine 274. Over asparagine 275–valine 279 the chain is Cytoplasmic. The chain crosses the membrane as a helical span at residues proline 280–arginine 301. Over asparagine 302–threonine 311 the chain is Extracellular. Residues alanine 312–threonine 333 form a helical membrane-spanning segment. Residues valine 334 to arginine 420 are Cytoplasmic-facing. Residues leucine 421 to threonine 440 form a helical membrane-spanning segment. At tyrosine 441 to glutamine 455 the chain is on the extracellular side.

This sequence belongs to the ligand-gated ion channel (TC 1.A.9) family. Gamma-aminobutyric acid receptor (TC 1.A.9.5) subfamily. GABRA1 sub-subfamily. In terms of assembly, heteropentamer, formed by a combination of alpha (GABRA1-6), beta (GABRB1-3), gamma (GABRG1-3), delta (GABRD), epsilon (GABRE), rho (GABRR1-3), pi (GABRP) and theta (GABRQ) subunits, each subunit exhibiting distinct physiological and pharmacological properties. As to expression, brain.

It localises to the postsynaptic cell membrane. The protein localises to the cell membrane. It catalyses the reaction chloride(in) = chloride(out). Allosterically activated by benzodiazepines, the neuroanesthetic alphaxalone and pentobarbital. Inhibited by the antagonist bicuculline. Potentiated by histamine. Functionally, alpha subunit of the heteropentameric ligand-gated chloride channel gated by gamma-aminobutyric acid (GABA), a major inhibitory neurotransmitter in the brain. GABA-gated chloride channels, also named GABA(A) receptors (GABAAR), consist of five subunits arranged around a central pore and contain GABA active binding site(s) located at the alpha and beta subunit interface(s). When activated by GABA, GABAARs selectively allow the flow of chloride anions across the cell membrane down their electrochemical gradient. Chloride influx into the postsynaptic neuron following GABAAR opening decreases the neuron ability to generate a new action potential, thereby reducing nerve transmission. The GABAARs can also initiate the formation of functional inhibitory GABAergic synapses. GABAARs function also as histamine receptor where histamine binds at the interface of two neighboring beta subunits and potentiates GABA response. The chain is Gamma-aminobutyric acid receptor subunit alpha-1 (GABRA1) from Gallus gallus (Chicken).